We begin with the raw amino-acid sequence, 84 residues long: Large ribosomal subunit protein bL31B (84 aa).

Belongs to the bacterial ribosomal protein bL31 family. Type B subfamily. As to quaternary structure, part of the 50S ribosomal subunit.

The protein is Large ribosomal subunit protein bL31B of Acinetobacter baumannii (strain AB307-0294).